Here is a 253-residue protein sequence, read N- to C-terminus: Sulfate transporter CysZ (253 aa).

The next 4 membrane-spanning stretches (helical) occupy residues 31–51 (FVIL…WWLF), 75–95 (LLWP…FSTI), 151–171 (IVLL…PVLW), and 222–242 (IPLL…AMWV).

It belongs to the CysZ family.

The protein resides in the cell inner membrane. In terms of biological role, high affinity, high specificity proton-dependent sulfate transporter, which mediates sulfate uptake. Provides the sulfur source for the cysteine synthesis pathway. The chain is Sulfate transporter CysZ from Shigella dysenteriae serotype 1 (strain Sd197).